The following is a 271-amino-acid chain: MNTPEDSTLGREVAYPSGYDPSLLFPIPRAAGREAIGLTGALPFTGRDRWHAYELSWLDAHGKPCVATATLHVPHDSPALIESKSLKLYLNSLNATRFNSAEAVRTRIVTDLSTRAGADVSVEFGLPPIDGVGDGESIDALDVSIDDYGPPNAAYLTAQAQPVVEEVLTSALLKSNCPVTGQPDWASVTLHYRGAPIEREGLLRYLVSFRDHAEFHEQCVERIFHDVLLRCAPEWLVVEARYTRRGGLDINPLRSSLSVPAPLSVFRDLRQ.

81-83 is a substrate binding site; the sequence is IES. Residue 83–84 coordinates NADPH; the sequence is SK. Residue C177 is the Thioimide intermediate of the active site. Catalysis depends on D184, which acts as the Proton donor. 216–217 serves as a coordination point for substrate; that stretch reads HE. 245–246 is an NADPH binding site; that stretch reads RG.

Belongs to the GTP cyclohydrolase I family. QueF type 2 subfamily. As to quaternary structure, homodimer.

The protein resides in the cytoplasm. The catalysed reaction is 7-aminomethyl-7-carbaguanine + 2 NADP(+) = 7-cyano-7-deazaguanine + 2 NADPH + 3 H(+). It participates in tRNA modification; tRNA-queuosine biosynthesis. In terms of biological role, catalyzes the NADPH-dependent reduction of 7-cyano-7-deazaguanine (preQ0) to 7-aminomethyl-7-deazaguanine (preQ1). The protein is NADPH-dependent 7-cyano-7-deazaguanine reductase of Xanthomonas oryzae pv. oryzae (strain MAFF 311018).